A 731-amino-acid chain; its full sequence is Catalase-peroxidase (731 aa).

A disordered region spans residues M1–N24. The segment at residues W96 to Y219 is a cross-link (tryptophyl-tyrosyl-methioninium (Trp-Tyr) (with M-245)). H97 serves as the catalytic Proton acceptor. The segment at residues Y219 to M245 is a cross-link (tryptophyl-tyrosyl-methioninium (Tyr-Met) (with W-96)). H260 is a heme b binding site. The disordered stretch occupies residues G339–A365.

It belongs to the peroxidase family. Peroxidase/catalase subfamily. In terms of assembly, homodimer or homotetramer. Heme b serves as cofactor. Post-translationally, formation of the three residue Trp-Tyr-Met cross-link is important for the catalase, but not the peroxidase activity of the enzyme.

It carries out the reaction H2O2 + AH2 = A + 2 H2O. The enzyme catalyses 2 H2O2 = O2 + 2 H2O. In terms of biological role, bifunctional enzyme with both catalase and broad-spectrum peroxidase activity. The sequence is that of Catalase-peroxidase from Polaromonas sp. (strain JS666 / ATCC BAA-500).